The chain runs to 177 residues: Flavodoxin (177 aa).

Residues 4–173 form the Flavodoxin-like domain; it reads IGIFFGSDTG…RIDTWLDKLK (170 aa).

This sequence belongs to the flavodoxin family. It depends on FMN as a cofactor.

Functionally, low-potential electron donor to a number of redox enzymes. NifF is the electron donor to nitrogenase. The protein is Flavodoxin (nifF) of Enterobacter agglomerans (Erwinia herbicola).